The chain runs to 104 residues: Urease subunit beta (104 aa).

The protein belongs to the urease beta subunit family. Heterotrimer of UreA (gamma), UreB (beta) and UreC (alpha) subunits. Three heterotrimers associate to form the active enzyme.

The protein resides in the cytoplasm. The enzyme catalyses urea + 2 H2O + H(+) = hydrogencarbonate + 2 NH4(+). The protein operates within nitrogen metabolism; urea degradation; CO(2) and NH(3) from urea (urease route): step 1/1. This Rhodopseudomonas palustris (strain BisB18) protein is Urease subunit beta.